We begin with the raw amino-acid sequence, 289 residues long: Pantothenate synthetase (289 aa).

30–37 (MGYLHEGH) contacts ATP. Histidine 37 acts as the Proton donor in catalysis. Position 61 (glutamine 61) interacts with (R)-pantoate. Glutamine 61 contributes to the beta-alanine binding site. ATP is bound at residue 147–150 (GLKD). Glutamine 153 provides a ligand contact to (R)-pantoate. ATP contacts are provided by residues valine 176 and 184-187 (KSSR).

This sequence belongs to the pantothenate synthetase family. As to quaternary structure, homodimer.

Its subcellular location is the cytoplasm. The enzyme catalyses (R)-pantoate + beta-alanine + ATP = (R)-pantothenate + AMP + diphosphate + H(+). It functions in the pathway cofactor biosynthesis; (R)-pantothenate biosynthesis; (R)-pantothenate from (R)-pantoate and beta-alanine: step 1/1. Its function is as follows. Catalyzes the condensation of pantoate with beta-alanine in an ATP-dependent reaction via a pantoyl-adenylate intermediate. In Geobacillus thermodenitrificans (strain NG80-2), this protein is Pantothenate synthetase.